The primary structure comprises 419 residues: Endochitinase 2 (419 aa).

An N-terminal signal peptide occupies residues 1 to 18 (MHHLRALVGVGLAGLAAG). The 309-residue stretch at 35 to 343 (AQNVVYWGQN…QQAKSILVNG (309 aa)) folds into the GH18 domain. The N-linked (GlcNAc...) asparagine glycan is linked to Asn153. Glu173 acts as the Proton donor in catalysis. N-linked (GlcNAc...) asparagine glycosylation is found at Asn237 and Asn256. The span at 350–381 (GPPSSTPATAPAPTATTMPSSTSVSSPAASPT) shows a compositional bias: low complexity. A disordered region spans residues 350–386 (GPPSSTPATAPAPTATTMPSSTSVSSPAASPTGGTVP). The 37-residue stretch at 383-419 (GTVPQWGQCGGEGYSGPTQCVAPYQCVKQGDWWSSCR) folds into the CBM1 domain.

This sequence belongs to the glycosyl hydrolase 18 family. Chitinase class III subfamily.

It localises to the secreted. The catalysed reaction is Random endo-hydrolysis of N-acetyl-beta-D-glucosaminide (1-&gt;4)-beta-linkages in chitin and chitodextrins.. Its function is as follows. Secreted chitinase involved in the degradation of chitin, a component of the cell walls of fungi and exoskeletal elements of some animals (including worms and arthropods). Participates in the infection process and directly acts in the penetration process of the host cuticle. The protein is Endochitinase 2 (chi2) of Metarhizium robertsii (strain ARSEF 23 / ATCC MYA-3075) (Metarhizium anisopliae (strain ARSEF 23)).